Reading from the N-terminus, the 202-residue chain is Large ribosomal subunit protein bL25 (202 aa).

Belongs to the bacterial ribosomal protein bL25 family. CTC subfamily. In terms of assembly, part of the 50S ribosomal subunit; part of the 5S rRNA/L5/L18/L25 subcomplex. Contacts the 5S rRNA. Binds to the 5S rRNA independently of L5 and L18.

Functionally, this is one of the proteins that binds to the 5S RNA in the ribosome where it forms part of the central protuberance. This Rickettsia bellii (strain OSU 85-389) protein is Large ribosomal subunit protein bL25.